The sequence spans 167 residues: Male-specific protein scotti (167 aa).

Residues asparagine 30, asparagine 124, and asparagine 148 are each glycosylated (N-linked (GlcNAc...) asparagine).

This sequence belongs to the male-specific scotti family.

Its function is as follows. Post-meiotically transcribed gene that has a role in late spermiogenesis; required for actin cone progression during spermatid individualization. The protein is Male-specific protein scotti of Drosophila ananassae (Fruit fly).